A 1230-amino-acid chain; its full sequence is Cullin-associated NEDD8-dissociated protein 1 (1230 aa).

Alanine 2 carries the post-translational modification N-acetylalanine. HEAT repeat units follow at residues 2 to 39 (ASASYHISNLLEKMTSSDKDFRFMATNDLMTELQKDSI), 44 to 81 (DSERKVVKMILRLLEDKNGEVQNLAVKCLGPLVSKVKE), 83 to 119 (QVETIVDTLCTNMLSDKEQLRDISSIGLKTVIGELPP), 131 to 165 (CKKITGRLTSAIAKQEDVSVQLEALDIMADMLSRQ), 171 to 208 (NFHPSILTCLLPQLTSPRLAVRKRTIIALGHLVMSCGN), 210 to 247 (VFVDLIEHLLSELSKNDSMSTTRTYIQCIAAISRQAGH), 248 to 282 (RIGEYLEKIIPLVVKFCNVDDDELREYCIQAFESF), 289 to 366 (EVYP…TRHE), 370 to 407 (EFYKTVSPALIARFKEREENVKADVFHAYLSLLKQTRP), 424 to 467 (PLTM…VLPG), 471 to 510 (QHIPVLVPGIIFSLNDKSSSSNLKIDALSCLYVILCNHSP), and 515 to 552 (PHVQALVPPVVACVGDPFYKITSEALLVTQQLVKVIRP). Positions 315–344 (DEDEDENAMDADGGDDDDQGSDDEYSDDDD) are disordered. At serine 335 the chain carries Phosphoserine. Serine 558 is modified (phosphoserine). 15 HEAT repeats span residues 563–602 (PYIKDLFTCTIKRLKAADIDQEVKERAISCMGQIICNLGD), 606–643 (PDLSNTLQIFLERLKNEITRLTTVKALTLIAGSPLKID), 646–683 (PVLGEGVPILASFLRKNQRALKLGTLSALDILIKNYSD), 688–725 (AMIDAVLDELPPLISESDMHVSQMAISFLTTLAKVYPS), 729–768 (KISGSILNELIGLVRSPLLQGGALSAMLDFFQALVVTGTN), 770–808 (LGYMDLLRMLTGPVYSQSTALTHKQSYYSIAKCVAALTR), 809–845 (ACPKEGPAVVGQFIQDVKNSRSTDSIRLLALLSLGEV), 852–889 (SGQLELKSVILEAFSSPSEEVKSAASYALGSISVGNLP), 890–927 (EYLPFVLQEITSQPKRQYLLLHSLKEIISSASVAGLKP), 928–960 (YVENIWALLLKHCECAEEGTRNVVAECLGKLTL), 961–998 (IDPETLLPRLKGYLISGSSYARSSVVTAVKFTISDHPQ), 1002–1039 (PLLKNCIGDFLKTLEDPDLNVRRVALVTFNSAAHNKPS), 1043–1097 (DLLD…DSCL), 1099–1133 (RLDIFEFLNHVEDGLKDHYDIKMLTFLMLVRLSTL), and 1140–1189 (QRLD…IPEA). N6-acetyllysine is present on lysine 971.

The protein belongs to the CAND family. As to quaternary structure, interacts with TBP. Part of a complex that contains CUL1 and RBX1. Interacts with unneddylated cullins: interacts with CUL1, CUL2, CUL3, CUL4A, CUL4B and CUL5. Does not bind neddylated CUL1. Interaction with cullins is abolished in presence of COMMD1, which antagonizes with CAND1 for interacting with cullins. Interacts with ERCC6. Interacts with DCUN1D1, DCUN1D2, DCUN1D3, DCUN1D4 and DCUN1D5; these interactions are bridged by cullins and strongly inhibits the neddylation of cullins.

The protein resides in the cytoplasm. It localises to the nucleus. Functionally, key assembly factor of SCF (SKP1-CUL1-F-box protein) E3 ubiquitin ligase complexes that promotes the exchange of the substrate-recognition F-box subunit in SCF complexes, thereby playing a key role in the cellular repertoire of SCF complexes. Acts as a F-box protein exchange factor. The exchange activity of CAND1 is coupled with cycles of neddylation conjugation: in the deneddylated state, cullin-binding CAND1 binds CUL1-RBX1, increasing dissociation of the SCF complex and promoting exchange of the F-box protein. Probably plays a similar role in other cullin-RING E3 ubiquitin ligase complexes. The chain is Cullin-associated NEDD8-dissociated protein 1 (Cand1) from Mus musculus (Mouse).